Consider the following 506-residue polypeptide: Probable Xaa-Pro aminopeptidase PAAG_05466 (506 aa).

4 residues coordinate Mn(2+): Asp285, Asp296, Glu433, and Glu471.

This sequence belongs to the peptidase M24B family. It depends on Mn(2+) as a cofactor.

It catalyses the reaction Release of any N-terminal amino acid, including proline, that is linked to proline, even from a dipeptide or tripeptide.. Catalyzes the removal of a penultimate prolyl residue from the N-termini of peptides. In Paracoccidioides lutzii (strain ATCC MYA-826 / Pb01) (Paracoccidioides brasiliensis), this protein is Probable Xaa-Pro aminopeptidase PAAG_05466.